The following is a 186-amino-acid chain: MIVAGDFKNGVTFELDNNIFQVVEFQHVKPGKGAAFVRTKLKNIITGATVERTFNPTDKMPKAHIERKDMQYLYNDGDLYYFMDVESYEQLPINKETIGNTLDLVKENDIVKILSHKGNVFGIEPPTFVELEVTETDPGFKGDTATGATKPATVETGYVIKVPLFVNTGDIIRIDTRTNEYMERVK.

This sequence belongs to the elongation factor P family.

Its subcellular location is the cytoplasm. Its pathway is protein biosynthesis; polypeptide chain elongation. In terms of biological role, involved in peptide bond synthesis. Stimulates efficient translation and peptide-bond synthesis on native or reconstituted 70S ribosomes in vitro. Probably functions indirectly by altering the affinity of the ribosome for aminoacyl-tRNA, thus increasing their reactivity as acceptors for peptidyl transferase. This Ruminiclostridium cellulolyticum (strain ATCC 35319 / DSM 5812 / JCM 6584 / H10) (Clostridium cellulolyticum) protein is Elongation factor P.